The primary structure comprises 319 residues: 1-aminocyclopropane-1-carboxylate oxidase (319 aa).

The region spanning 153–253 is the Fe2OG dioxygenase domain; sequence PTFGTKVSNY…RMSIASFYNP (101 aa). Fe cation contacts are provided by histidine 177, aspartate 179, and histidine 234.

It belongs to the iron/ascorbate-dependent oxidoreductase family. The cofactor is Fe cation.

It catalyses the reaction 1-aminocyclopropane-1-carboxylate + L-ascorbate + O2 = ethene + L-dehydroascorbate + hydrogen cyanide + CO2 + 2 H2O. Its pathway is alkene biosynthesis; ethylene biosynthesis via S-adenosyl-L-methionine; ethylene from S-adenosyl-L-methionine: step 2/2. The protein is 1-aminocyclopropane-1-carboxylate oxidase (ACO1) of Prunus mume (Japanese apricot).